The sequence spans 118 residues: Large ribosomal subunit protein uL18 (118 aa).

The protein belongs to the universal ribosomal protein uL18 family. In terms of assembly, part of the 50S ribosomal subunit; part of the 5S rRNA/L5/L18/L25 subcomplex. Contacts the 5S and 23S rRNAs.

Its function is as follows. This is one of the proteins that bind and probably mediate the attachment of the 5S RNA into the large ribosomal subunit, where it forms part of the central protuberance. The protein is Large ribosomal subunit protein uL18 of Zymomonas mobilis subsp. mobilis (strain ATCC 31821 / ZM4 / CP4).